Consider the following 332-residue polypeptide: Fructose-1,6-bisphosphatase class 1 (332 aa).

4 residues coordinate Mg(2+): Glu-94, Asp-116, Leu-118, and Asp-119. Substrate-binding positions include 119–122 (DGSS), Asn-211, Tyr-239, 257–259 (YLY), and Lys-269. A Mg(2+)-binding site is contributed by Glu-275.

It belongs to the FBPase class 1 family. As to quaternary structure, homotetramer. Mg(2+) is required as a cofactor.

It localises to the cytoplasm. It catalyses the reaction beta-D-fructose 1,6-bisphosphate + H2O = beta-D-fructose 6-phosphate + phosphate. Its pathway is carbohydrate biosynthesis; Calvin cycle. This chain is Fructose-1,6-bisphosphatase class 1, found in Synechococcus sp. (strain JA-2-3B'a(2-13)) (Cyanobacteria bacterium Yellowstone B-Prime).